Reading from the N-terminus, the 402-residue chain is Argininosuccinate synthase (402 aa).

Alanine 9–serine 17 is a binding site for ATP. Tyrosine 86 contacts L-citrulline. An ATP-binding site is contributed by glycine 116. L-aspartate contacts are provided by threonine 118, asparagine 122, and aspartate 123. L-citrulline is bound at residue asparagine 122. Arginine 126, serine 174, serine 183, glutamate 259, and tyrosine 271 together coordinate L-citrulline.

This sequence belongs to the argininosuccinate synthase family. Type 1 subfamily. As to quaternary structure, homotetramer.

Its subcellular location is the cytoplasm. The enzyme catalyses L-citrulline + L-aspartate + ATP = 2-(N(omega)-L-arginino)succinate + AMP + diphosphate + H(+). It functions in the pathway amino-acid biosynthesis; L-arginine biosynthesis; L-arginine from L-ornithine and carbamoyl phosphate: step 2/3. The protein is Argininosuccinate synthase of Anoxybacillus flavithermus (strain DSM 21510 / WK1).